The sequence spans 258 residues: Protein UL24 homolog (258 aa).

It belongs to the herpesviridae UL24 family.

The protein resides in the virion. It is found in the host cytoplasm. The protein localises to the host nucleus. It localises to the host nucleolus. Its subcellular location is the host Golgi apparatus. Its function is as follows. May participate in nuclear egress of viral particles. Plays a role in the dispersal of several host nucleolar proteins including NCL/nucleolin and NPM1. Since deletion of host NCL/nucleolin negatively impact on nuclear egress, UL24 supposedly acts on this process through its effect on host nucleoli. The chain is Protein UL24 homolog from Homo sapiens (Human).